Here is a 606-residue protein sequence, read N- to C-terminus: Prostaglandin G/H synthase 1 (606 aa).

A signal peptide spans 1 to 30; it reads MSRSSPSLRLPVLLLLLLLLLLPPPPPVLP. The EGF-like domain occupies 38–76; the sequence is PVNPCCYFPCQHQGVCVRVALDRYQCDCTRTGYSGPNCT. 4 disulfides stabilise this stretch: cysteine 42/cysteine 53, cysteine 43/cysteine 165, cysteine 47/cysteine 63, and cysteine 65/cysteine 75. 3 N-linked (GlcNAc...) asparagine glycosylation sites follow: asparagine 74, asparagine 110, and asparagine 150. Histidine 213 functions as the Proton acceptor in the catalytic mechanism. Catalysis depends on tyrosine 391, which acts as the For cyclooxygenase activity. Heme b is bound at residue histidine 394. N-linked (GlcNAc...) asparagine glycosylation occurs at asparagine 416. Cysteine 575 and cysteine 581 are disulfide-bonded.

This sequence belongs to the prostaglandin G/H synthase family. In terms of assembly, homodimer. Requires heme b as cofactor.

It localises to the microsome membrane. It is found in the endoplasmic reticulum membrane. It carries out the reaction (5Z,8Z,11Z,14Z)-eicosatetraenoate + AH2 + 2 O2 = prostaglandin H2 + A + H2O. The catalysed reaction is (5Z,8Z,11Z,14Z)-eicosatetraenoate + 2 O2 = prostaglandin G2. It catalyses the reaction prostaglandin G2 + AH2 = prostaglandin H2 + A + H2O. The enzyme catalyses (9Z,12Z)-octadecadienoate + AH2 + O2 = (9R)-hydroxy-(10E,12Z)-octadecadienoate + A + H2O. It carries out the reaction (9Z,12Z)-octadecadienoate + AH2 + O2 = (9S)-hydroxy-(10E,12Z)-octadecadienoate + A + H2O. The catalysed reaction is (9Z,12Z)-octadecadienoate + AH2 + O2 = (13S)-hydroxy-(9Z,11E)-octadecadienoate + A + H2O. It catalyses the reaction (9Z,12Z)-octadecadienoate + AH2 + O2 = (13R)-hydroxy-(9Z,11E)-octadecadienoate + A + H2O. The protein operates within lipid metabolism; prostaglandin biosynthesis. With respect to regulation, the cyclooxygenase activity is inhibited by nonsteroidal anti-inflammatory drugs (NSAIDs) including ibuprofen, flurbiprofen, ketoprofen, naproxen, flurbiprofen, anirolac, fenclofenac and diclofenac. Dual cyclooxygenase and peroxidase that plays an important role in the biosynthesis pathway of prostanoids, a class of C20 oxylipins mainly derived from arachidonate ((5Z,8Z,11Z,14Z)-eicosatetraenoate, AA, C20:4(n-6)), with a particular role in the inflammatory response. The cyclooxygenase activity oxygenates AA to the hydroperoxy endoperoxide prostaglandin G2 (PGG2), and the peroxidase activity reduces PGG2 to the hydroxy endoperoxide prostaglandin H2 (PGH2), the precursor of all 2-series prostaglandins and thromboxanes. This complex transformation is initiated by abstraction of hydrogen at carbon 13 (with S-stereochemistry), followed by insertion of molecular O2 to form the endoperoxide bridge between carbon 9 and 11 that defines prostaglandins. The insertion of a second molecule of O2 (bis-oxygenase activity) yields a hydroperoxy group in PGG2 that is then reduced to PGH2 by two electrons. Involved in the constitutive production of prostanoids in particular in the stomach and platelets. In gastric epithelial cells, it is a key step in the generation of prostaglandins, such as prostaglandin E2 (PGE2), which plays an important role in cytoprotection. In platelets, it is involved in the generation of thromboxane A2 (TXA2), which promotes platelet activation and aggregation, vasoconstriction and proliferation of vascular smooth muscle cells. Can also use linoleate (LA, (9Z,12Z)-octadecadienoate, C18:2(n-6)) as substrate and produce hydroxyoctadecadienoates (HODEs) in a regio- and stereospecific manner, being (9R)-HODE ((9R)-hydroxy-(10E,12Z)-octadecadienoate) and (13S)-HODE ((13S)-hydroxy-(9Z,11E)-octadecadienoate) its major products. The chain is Prostaglandin G/H synthase 1 (PTGS1) from Oryctolagus cuniculus (Rabbit).